The primary structure comprises 106 residues: Large ribosomal subunit protein P1A (106 aa).

The disordered stretch occupies residues alanine 74 to aspartate 106. Residues glutamate 82 to methionine 100 show a composition bias toward acidic residues.

Belongs to the eukaryotic ribosomal protein P1/P2 family. In terms of assembly, component of the large ribosomal subunit (LSU). Mature ribosomes consist of a small (40S) and a large (60S) subunit. The 40S subunit contains about 32 different proteins and 1 molecule of RNA (18S). The 60S subunit contains 45 different proteins and 3 molecules of RNA (25S, 5.8S and 5S). The 5 acidic ribosomal P-proteins form the stalk structure of the 60S subunit. They are organized as a pentameric complex in which uL10/P0 interacts with 2 heterodimers, P1A-P2B and P1B-P2A. Phosphorylated.

Its subcellular location is the cytoplasm. Its function is as follows. Component of the ribosome, a large ribonucleoprotein complex responsible for the synthesis of proteins in the cell. The small ribosomal subunit (SSU) binds messenger RNAs (mRNAs) and translates the encoded message by selecting cognate aminoacyl-transfer RNA (tRNA) molecules. The large subunit (LSU) contains the ribosomal catalytic site termed the peptidyl transferase center (PTC), which catalyzes the formation of peptide bonds, thereby polymerizing the amino acids delivered by tRNAs into a polypeptide chain. The nascent polypeptides leave the ribosome through a tunnel in the LSU and interact with protein factors that function in enzymatic processing, targeting, and the membrane insertion of nascent chains at the exit of the ribosomal tunnel. The protein is Large ribosomal subunit protein P1A (RPP1A) of Candida albicans (strain SC5314 / ATCC MYA-2876) (Yeast).